The sequence spans 303 residues: Movement protein (303 aa).

The stretch at proline 272–lysine 302 forms a coiled coil.

It belongs to the caulimoviridae movement protein family. Homotrimer, through the coiled-coil domain. Interacts with VAP.

Its subcellular location is the host cell junction. The protein resides in the host plasmodesma. Transports viral genome to neighboring plant cells directly through plasmosdesmata, without any budding. The movement protein allows efficient cell to cell propagation, by bypassing the host cell wall barrier. Acts by forming tubules structures that increase the size exclusion limit (SEL) of plasmodesmata, thereby allowing viral ribonucleocapsids to spread directly to neighboring cells. In Soybean chlorotic mottle virus, this protein is Movement protein.